A 72-amino-acid polypeptide reads, in one-letter code: Protein SlyX homolog (72 aa).

It belongs to the SlyX family.

This Bradyrhizobium diazoefficiens (strain JCM 10833 / BCRC 13528 / IAM 13628 / NBRC 14792 / USDA 110) protein is Protein SlyX homolog.